The following is a 352-amino-acid chain: Threonine synthase (352 aa).

Lysine 59 is modified (N6-(pyridoxal phosphate)lysine). Pyridoxal 5'-phosphate-binding positions include asparagine 85, 185–189, and threonine 314; that span reads GNAGN.

This sequence belongs to the threonine synthase family. Pyridoxal 5'-phosphate serves as cofactor.

The enzyme catalyses O-phospho-L-homoserine + H2O = L-threonine + phosphate. The protein operates within amino-acid biosynthesis; L-threonine biosynthesis; L-threonine from L-aspartate: step 5/5. In terms of biological role, catalyzes the gamma-elimination of phosphate from L-phosphohomoserine and the beta-addition of water to produce L-threonine. The sequence is that of Threonine synthase (thrC) from Bacillus sp. (strain ULM1).